The primary structure comprises 500 residues: MGCGLRKLEDPDESSPGKIFSTLKRPQVETKTEFAYEYALLDFTLQASTNPDVIKINSVLDIVAKVEDYYLKGYVVGAIHPVIQPVGQRKHLPASHLYRAVLSRLKLSPKHSAAGGQRRARLVMEECPLTCEAQANDAAKELMDKINAAAKRGMKFVGLVSQCYLPSMHCNGASHDGVAESGLHVRQDSQDNCKGWNEGALGGHLSESGVEEEPQHESGQHQTERNSSPSYANPKRGEAPDGKLYMVFNAFEEDAASWAYQEGVLSMKVTRKGAVISALDANWLELTTFYYKQGFSLIDSFVCWETPKGDQLPKSLEGFFIYEEEGSGVPGSNRRGNDAIVVEQWTVIEGCEIKTDYGPLLHTLAEFGWLLTSVLPTPILRHDSEGNLATKQVVFLQRPVTWNSAAQTPERKGSRLLKGEDRNKVSSRSLGLDTNASQAAGGRAPLEEGSLSPSRECWTKEERPAQSDSFSGFSSSDSVLRELDDGQFDQEEGVTQVTCM.

A lipid anchor (N-myristoyl glycine) is attached at G2. C3 carries the S-palmitoyl cysteine lipid modification. The disordered stretch occupies residues 203-236 (GHLSESGVEEEPQHESGQHQTERNSSPSYANPKR). A compositionally biased stretch (basic and acidic residues) spans 213–224 (EPQHESGQHQTE). S404 is modified (phosphoserine). The disordered stretch occupies residues 406 to 500 (AQTPERKGSR…EEGVTQVTCM (95 aa)). T408 is modified (phosphothreonine). Basic and acidic residues predominate over residues 409-424 (PERKGSRLLKGEDRNK). Polar residues predominate over residues 426-438 (SSRSLGLDTNASQ). At S429 the chain carries Phosphoserine. The segment covering 467-478 (SDSFSGFSSSDS) has biased composition (low complexity).

This sequence belongs to the raftlin family. In terms of tissue distribution, expressed in B-cells, heart, brain, spleen, large intestine and lung. Expressed in dendritic cells and macrophages.

The protein localises to the cell membrane. Its function is as follows. Upon bacterial lipopolysaccharide stimulation, mediates clathrin-dependent internalization of TLR4 in dendritic cells, resulting in activation of TICAM1-mediated signaling and subsequent IFNB1 production. May regulate B-cell antigen receptor-mediated signaling. In Mus musculus (Mouse), this protein is Raftlin-2 (Rftn2).